Consider the following 1154-residue polypeptide: PAN2-PAN3 deadenylation complex catalytic subunit pan2 (1154 aa).

3 WD repeats span residues 20-59 (GLPTVATTIAFDDVSELLWAGNEYGRITSFYGPELQRYTS), 102-145 (THDE…DKLR), and 276-315 (ATVSFMLGIEISPSGEALAINDAECFIQLWGSPAKIHFNE). The tract at residues 316 to 451 (MSKEVEFADV…GARISGESED (136 aa)) is linker. The USP domain occupies 452–821 (DPLLKYSNVE…SPCVLAFQVR (370 aa)). Positions 870–1048 (VALDTEFVDL…IEDARMALRL (179 aa)) constitute an Exonuclease domain. Residues Asp873, Glu875, Asp982, and Asp1041 each contribute to the a divalent metal cation site. The segment at 1092–1154 (PGTAVTMQNN…GEFFTGSPLK (63 aa)) is disordered. Composition is skewed to polar residues over residues 1096 to 1109 (VTMQNNSGRNTPST) and 1132 to 1141 (LTPSNGTFSG).

This sequence belongs to the peptidase C19 family. PAN2 subfamily. In terms of assembly, forms a heterotrimer with an asymmetric homodimer of the regulatory subunit pan3 to form the poly(A)-nuclease (PAN) deadenylation complex. A divalent metal cation is required as a cofactor.

The protein localises to the cytoplasm. The catalysed reaction is Exonucleolytic cleavage of poly(A) to 5'-AMP.. Its activity is regulated as follows. Positively regulated by the regulatory subunit pan3. Catalytic subunit of the poly(A)-nuclease (PAN) deadenylation complex, one of two cytoplasmic mRNA deadenylases involved in mRNA turnover. PAN specifically shortens poly(A) tails of RNA and the activity is stimulated by poly(A)-binding protein pab1. PAN deadenylation is followed by rapid degradation of the shortened mRNA tails by the CCR4-NOT complex. Deadenylated mRNAs are then degraded by two alternative mechanisms, namely exosome-mediated 3'-5' exonucleolytic degradation, or deadenylation-dependent mRNA decaping and subsequent 5'-3' exonucleolytic degradation by xrn1. May also be involved in post-transcriptional maturation of mRNA poly(A) tails. This Emericella nidulans (strain FGSC A4 / ATCC 38163 / CBS 112.46 / NRRL 194 / M139) (Aspergillus nidulans) protein is PAN2-PAN3 deadenylation complex catalytic subunit pan2.